We begin with the raw amino-acid sequence, 167 residues long: CGG triplet repeat-binding protein 1 (167 aa).

A Phosphoserine modification is found at Ser56. The interval 65–86 is disordered; it reads KTHTKRKAEFEEQNVRKKQRPL. A Nuclear localization signal motif is present at residues 80-84; that stretch reads RKKQR. Ser164 is modified (phosphoserine).

It is found in the nucleus. Its function is as follows. Binds to nonmethylated 5'-d(CGG)(n)-3' trinucleotide repeats in the FMR1 promoter. May play a role in regulating FMR1 promoter. The chain is CGG triplet repeat-binding protein 1 (Cggbp1) from Mus musculus (Mouse).